Consider the following 426-residue polypeptide: COP9 signalosome complex subunit 6 (426 aa).

An MPN domain is found at 14–155 (VLLHPLVIMQ…AGTTRKLPLF (142 aa)). The tract at residues 320-426 (PVRFKSQHLG…NESDESSQAS (107 aa)) is disordered. Residues 334–347 (ADDDDYFDDEDLEN) show a composition bias toward acidic residues.

The protein belongs to the peptidase M67A family. CSN6 subfamily. In terms of assembly, component of the CSN complex, probably composed of csn-1, csn-2, csn-3, csn-4, csn-5, csn-6 and csn-7. Within the complex it probably interacts directly with csn-2 and csn-4. Interacts with rbx-1.

It is found in the cytoplasm. The protein resides in the nucleus. Functionally, component of the COP9 signalosome complex (CSN), a complex involved in various cellular and developmental processes. The CSN complex is an essential regulator of the ubiquitin (Ubl) conjugation pathway by mediating the deneddylation of the cullin subunits of the SCF-type E3 ligase complexes, leading to decrease the Ubl ligase activity of SCF. The CSN complex plays an essential role in embryogenesis and oogenesis and is required to regulate microtubule stability in the early embryo. Mediates mei-3/katanin targeting for degradation at the meiosis to mitosis transition via deneddylation of cul-3. The chain is COP9 signalosome complex subunit 6 (csn-6) from Caenorhabditis elegans.